We begin with the raw amino-acid sequence, 291 residues long: ATP synthase gamma chain (291 aa).

This sequence belongs to the ATPase gamma chain family. In terms of assembly, F-type ATPases have 2 components, CF(1) - the catalytic core - and CF(0) - the membrane proton channel. CF(1) has five subunits: alpha(3), beta(3), gamma(1), delta(1), epsilon(1). CF(0) has three main subunits: a, b and c.

It localises to the cell inner membrane. In terms of biological role, produces ATP from ADP in the presence of a proton gradient across the membrane. The gamma chain is believed to be important in regulating ATPase activity and the flow of protons through the CF(0) complex. The polypeptide is ATP synthase gamma chain (Neisseria meningitidis serogroup C (strain 053442)).